The chain runs to 567 residues: Geranylgeranyl transferase type-2 subunit alpha (567 aa).

6 PFTA repeats span residues 44–78 (LDESVLELTSQILGANPDFATLWNCRREVLQQLET), 88–122 (LVKAELGFLESCLRVNPKSYGTWHHRCWLLGRLPE), 124–158 (NWTRELELCARFLEVDERNFHCWDYRRFVATQAAV), 159–193 (PPAEELAFTDSLITRNFSNYSSWHYRSCLLPQLHP), 207–241 (VLLKELELVQNAFFTDPNDQSAWFYHRWLLGRADP), and 363–397 (VLQSELESCKELQELEPENKWCLLTIILLMRALDP). Ser-98 is subject to Phosphoserine. 5 LRR repeats span residues 442-463 (EVRVLHLAHKDLTVLCHLEQLL), 464-486 (LVTHLDLSHNRLRTLPPALAALR), 487-508 (CLEVLQASDNAIESLDGVTNLP), 509-530 (RLQELLLCNNRLQQPAVLQPLA), and 534-555 (RLVLLNLQGNPLCQAVGILEQL).

Belongs to the protein prenyltransferase subunit alpha family. As to quaternary structure, heterotrimer composed of RABGGTA, RABGGTB and CHM; within this trimer, RABGGTA and RABGGTB form the catalytic component B, while CHM (component A) mediates peptide substrate binding. The Rab GGTase dimer (RGGT) interacts with CHM (component A) prior to Rab protein binding; the association is stabilized by geranylgeranyl pyrophosphate (GGpp). The CHM:RGGT:Rab complex is destabilized by GGpp. Interacts with non-phosphorylated form of RAB8A; phosphorylation of RAB8A at 'Thr-72' disrupts this interaction.

It carries out the reaction geranylgeranyl diphosphate + L-cysteinyl-[protein] = S-geranylgeranyl-L-cysteinyl-[protein] + diphosphate. The enzymatic reaction requires the aid of a Rab escort protein (also called component A), such as CHM. In terms of biological role, catalyzes the transfer of a geranylgeranyl moiety from geranylgeranyl diphosphate to both cysteines of Rab proteins with the C-terminal sequence -XXCC, -XCXC and -CCXX, such as RAB1A, RAB3A, RAB5A and RAB7A. The chain is Geranylgeranyl transferase type-2 subunit alpha (RABGGTA) from Homo sapiens (Human).